A 222-amino-acid polypeptide reads, in one-letter code: GTP cyclohydrolase 1 (222 aa).

The Zn(2+) site is built by Cys111, His114, and Cys182.

Belongs to the GTP cyclohydrolase I family. As to quaternary structure, toroid-shaped homodecamer, composed of two pentamers of five dimers.

It catalyses the reaction GTP + H2O = 7,8-dihydroneopterin 3'-triphosphate + formate + H(+). The protein operates within cofactor biosynthesis; 7,8-dihydroneopterin triphosphate biosynthesis; 7,8-dihydroneopterin triphosphate from GTP: step 1/1. This is GTP cyclohydrolase 1 from Citrobacter koseri (strain ATCC BAA-895 / CDC 4225-83 / SGSC4696).